The primary structure comprises 112 residues: Putative pterin-4-alpha-carbinolamine dehydratase (112 aa).

Belongs to the pterin-4-alpha-carbinolamine dehydratase family.

The catalysed reaction is (4aS,6R)-4a-hydroxy-L-erythro-5,6,7,8-tetrahydrobiopterin = (6R)-L-erythro-6,7-dihydrobiopterin + H2O. This chain is Putative pterin-4-alpha-carbinolamine dehydratase, found in Shewanella piezotolerans (strain WP3 / JCM 13877).